The sequence spans 360 residues: Phospho-N-acetylmuramoyl-pentapeptide-transferase (360 aa).

Transmembrane regions (helical) follow at residues 27-47 (ILGV…VIVL), 73-93 (TMGG…WGDL), 97-117 (YVWV…VDDY), 145-165 (AFYL…VPLF), 168-188 (VAIP…VGTS), 199-219 (GLAI…AYLT), 236-256 (SGEL…FLWF), 263-283 (IFMG…IAVI), 288-308 (LVLF…ILQV), and 337-357 (KVIV…FATL).

Belongs to the glycosyltransferase 4 family. MraY subfamily. It depends on Mg(2+) as a cofactor.

The protein resides in the cell inner membrane. It carries out the reaction UDP-N-acetyl-alpha-D-muramoyl-L-alanyl-gamma-D-glutamyl-meso-2,6-diaminopimeloyl-D-alanyl-D-alanine + di-trans,octa-cis-undecaprenyl phosphate = di-trans,octa-cis-undecaprenyl diphospho-N-acetyl-alpha-D-muramoyl-L-alanyl-D-glutamyl-meso-2,6-diaminopimeloyl-D-alanyl-D-alanine + UMP. It participates in cell wall biogenesis; peptidoglycan biosynthesis. Its function is as follows. Catalyzes the initial step of the lipid cycle reactions in the biosynthesis of the cell wall peptidoglycan: transfers peptidoglycan precursor phospho-MurNAc-pentapeptide from UDP-MurNAc-pentapeptide onto the lipid carrier undecaprenyl phosphate, yielding undecaprenyl-pyrophosphoryl-MurNAc-pentapeptide, known as lipid I. The polypeptide is Phospho-N-acetylmuramoyl-pentapeptide-transferase (Marinomonas sp. (strain MWYL1)).